Consider the following 688-residue polypeptide: Telomere length regulation protein TEL2 (688 aa).

2 positions are modified to phosphoserine: Ser-417 and Ser-419.

This sequence belongs to the TEL2 family. As to quaternary structure, component of the TTT complex composed of TEL2, TTI1 and TTI2. Interacts with TTI1 and TTI2.

The protein localises to the nucleus. It localises to the chromosome. The protein resides in the telomere. Its function is as follows. Part of the TTT complex that is required to stabilize protein levels of the phosphatidylinositol 3-kinase-related protein kinase (PIKK) family proteins. Required for telomere length regulation and telomere position effect. Regulates telomere length and participates in gene silencing at subtelomeric regions. Binds to telomeric DNA repeats. This Saccharomyces cerevisiae (strain ATCC 204508 / S288c) (Baker's yeast) protein is Telomere length regulation protein TEL2 (TEL2).